A 305-amino-acid chain; its full sequence is 2-methoxy-6-polyprenyl-1,4-benzoquinol methylase, mitochondrial (305 aa).

The transit peptide at 1–34 (MSRLRAPVAKFLADGLKGIRSTALAGSRLSNCRY) directs the protein to the mitochondrion. S-adenosyl-L-methionine is bound by residues threonine 117, aspartate 143, and 173-174 (NA).

This sequence belongs to the class I-like SAM-binding methyltransferase superfamily. MenG/UbiE family. As to quaternary structure, component of a multi-subunit COQ enzyme complex, composed of at least COQ3, COQ4, COQ5, COQ6, COQ7 and COQ9.

The protein resides in the mitochondrion inner membrane. The enzyme catalyses 2-methoxy-6-(all-trans-decaprenyl)benzene-1,4-diol + S-adenosyl-L-methionine = 5-methoxy-2-methyl-3-(all-trans-decaprenyl)benzene-1,4-diol + S-adenosyl-L-homocysteine + H(+). The protein operates within cofactor biosynthesis; ubiquinone biosynthesis. Its function is as follows. Methyltransferase required for the conversion of 2-decaprenyl-6-methoxy-1,4-benzoquinol (DDMQH2) to 2-decaprenyl-3-methyl-6-methoxy-1,4-benzoquinol (DMQH2). This Schizosaccharomyces pombe (strain 972 / ATCC 24843) (Fission yeast) protein is 2-methoxy-6-polyprenyl-1,4-benzoquinol methylase, mitochondrial.